A 122-amino-acid chain; its full sequence is Large ribosomal subunit protein bL12 (122 aa).

It belongs to the bacterial ribosomal protein bL12 family. Homodimer. Part of the ribosomal stalk of the 50S ribosomal subunit. Forms a multimeric L10(L12)X complex, where L10 forms an elongated spine to which 2 to 4 L12 dimers bind in a sequential fashion. Binds GTP-bound translation factors.

Forms part of the ribosomal stalk which helps the ribosome interact with GTP-bound translation factors. Is thus essential for accurate translation. In Buchnera aphidicola subsp. Baizongia pistaciae (strain Bp), this protein is Large ribosomal subunit protein bL12.